Reading from the N-terminus, the 252-residue chain is Thiazole synthase (252 aa).

Catalysis depends on Lys-98, which acts as the Schiff-base intermediate with DXP. Residues Gly-159, 185-186, and 207-208 each bind 1-deoxy-D-xylulose 5-phosphate; these read AG and AT.

It belongs to the ThiG family. In terms of assembly, homotetramer. Forms heterodimers with either ThiH or ThiS.

The protein localises to the cytoplasm. It catalyses the reaction [ThiS sulfur-carrier protein]-C-terminal-Gly-aminoethanethioate + 2-iminoacetate + 1-deoxy-D-xylulose 5-phosphate = [ThiS sulfur-carrier protein]-C-terminal Gly-Gly + 2-[(2R,5Z)-2-carboxy-4-methylthiazol-5(2H)-ylidene]ethyl phosphate + 2 H2O + H(+). Its pathway is cofactor biosynthesis; thiamine diphosphate biosynthesis. Functionally, catalyzes the rearrangement of 1-deoxy-D-xylulose 5-phosphate (DXP) to produce the thiazole phosphate moiety of thiamine. Sulfur is provided by the thiocarboxylate moiety of the carrier protein ThiS. In vitro, sulfur can be provided by H(2)S. This Mycobacterium avium (strain 104) protein is Thiazole synthase.